Consider the following 207-residue polypeptide: Casparian strip membrane protein 1 (207 aa).

Residues 1–12 (MEGESTAVNITE) are compositionally biased toward polar residues. The disordered stretch occupies residues 1-24 (MEGESTAVNITETPKERKGKAPLL). The Cytoplasmic portion of the chain corresponds to 1–48 (MEGESTAVNITETPKERKGKAPLLAPPPASGGIKTIVQKAPKGGYKRG). A helical membrane pass occupies residues 49 to 69 (LAVFDVVLRIAGIAAALGAVI). The Extracellular segment spans residues 70 to 98 (AMGSTDQTLPFFTQFFQFKAEFDDLPVFT). Residues 99–119 (FFVIANAITAAYLALSIPISI) form a helical membrane-spanning segment. The Cytoplasmic portion of the chain corresponds to 120-138 (VCIIRPHLVGPRVLLTFLD). A helical membrane pass occupies residues 139–159 (TVMVGLTTAAAGGAASIVYLA). The Extracellular segment spans residues 160–184 (HNGNSDANWPAICQQFNDFCQEVSG). A helical transmembrane segment spans residues 185-205 (AVVASFITVVVLMFLIVLSAF). Residues 206 to 207 (SL) are Cytoplasmic-facing.

The protein belongs to the Casparian strip membrane proteins (CASP) family. In terms of assembly, homodimer and heterodimers.

The protein resides in the cell membrane. Functionally, regulates membrane-cell wall junctions and localized cell wall deposition. Required for establishment of the Casparian strip membrane domain (CSD) and the subsequent formation of Casparian strips, a cell wall modification of the root endodermis that determines an apoplastic barrier between the intraorganismal apoplasm and the extraorganismal apoplasm and prevents lateral diffusion. In Taraxacum kok-saghyz (Russian dandelion), this protein is Casparian strip membrane protein 1.